A 1234-amino-acid chain; its full sequence is Protein Jumonji (1234 aa).

The span at methionine 1–isoleucine 11 shows a compositional bias: basic residues. 4 disordered regions span residues methionine 1–proline 22, alanine 68–arginine 150, leucine 169–threonine 339, and arginine 354–glycine 548. A Phosphoserine modification is found at serine 78. The span at serine 86 to serine 98 shows a compositional bias: low complexity. Positions proline 104 to arginine 110 match the Nuclear localization signal motif. Residues phenylalanine 117–proline 129 are compositionally biased toward polar residues. Residues alanine 141–proline 170 form a sufficient for interaction with the PRC2 complex region. Residues glutamine 180–glutamate 193 show a composition bias toward acidic residues. The segment covering alanine 197 to proline 210 has biased composition (polar residues). Residues arginine 211–asparagine 221 are compositionally biased toward basic residues. The segment covering lysine 244–glutamine 264 has biased composition (basic and acidic residues). The segment covering alanine 265–alanine 285 has biased composition (low complexity). 2 stretches are compositionally biased toward polar residues: residues serine 304–alanine 322 and serine 369–alanine 384. The residue at position 378 (lysine 378) is an N6-acetyllysine. A compositionally biased stretch (basic and acidic residues) spans cysteine 418 to glutamate 440. A Phosphoserine modification is found at serine 449. Composition is skewed to basic and acidic residues over residues valine 482–asparagine 494 and serine 529–serine 544. In terms of domain architecture, JmjN spans isoleucine 555 to glutamate 596. In terms of domain architecture, ARID spans tryptophan 619–proline 711. The GSGFP motif motif lies at glycine 872–proline 876. The 165-residue stretch at proline 882–lysine 1046 folds into the JmjC domain. The segment at glutamate 1206 to serine 1234 is disordered.

Belongs to the JARID2 family. As to quaternary structure, associates with the PRC2 complex, which consists of the core components EED, EZH1 or EZH2, SUZ12, and RBBP4, and various combinations of accessory subunits including AEBP2, JARID2, PHF19, MTF2 and EPOP. Found in a monomeric PRC2.2 (class 2) complex consisting of at least SUZ12, RBBP4, AEBP2 and JARID2. Facilitates nucleosome binding of the PRC2 complex. Interacts with SUZ12 (via C2H2-type zinc finger domain); the interaction is direct; competes with EPOP for SUZ12 binding. Interacts with histone methyltransferases EHMT1/GLP1 and EHMT2/G9a. Interacts with GATA4 (via the N-terminal region). Interacts with NKX2-5 (via the C-terminal region). Interacts with RB1. Interacts with ZNF496. Interacts with ESRRB. Interacts with DDX18; this interaction inhibits the PRC2 complex. As to expression, widely expressed in embryos. In adults, expressed at high levels in heart, skeletal muscle, brain and thymus.

It is found in the nucleus. Functionally, regulator of histone methyltransferase complexes that plays an essential role in embryonic development, including heart and liver development, neural tube fusion process and hematopoiesis. Acts as an accessory subunit for the core PRC2 (Polycomb repressive complex 2) complex, which mediates histone H3K27 (H3K27me3) trimethylation on chromatin. Binds DNA and mediates the recruitment of the PRC2 complex to target genes in embryonic stem cells, thereby playing a key role in stem cell differentiation and normal embryonic development. In cardiac cells, it is required to repress expression of cyclin-D1 (CCND1) by activating methylation of 'Lys-9' of histone H3 (H3K9me) by the GLP1/EHMT1 and G9a/EHMT2 histone methyltransferases. Also acts as a transcriptional repressor of ANF via its interaction with GATA4 and NKX2-5. Participates in the negative regulation of cell proliferation signaling. Does not have histone demethylase activity. The sequence is that of Protein Jumonji (Jarid2) from Mus musculus (Mouse).